The chain runs to 356 residues: S-adenosylmethionine:tRNA ribosyltransferase-isomerase (356 aa).

The protein belongs to the QueA family. Monomer.

The protein resides in the cytoplasm. It catalyses the reaction 7-aminomethyl-7-carbaguanosine(34) in tRNA + S-adenosyl-L-methionine = epoxyqueuosine(34) in tRNA + adenine + L-methionine + 2 H(+). It functions in the pathway tRNA modification; tRNA-queuosine biosynthesis. In terms of biological role, transfers and isomerizes the ribose moiety from AdoMet to the 7-aminomethyl group of 7-deazaguanine (preQ1-tRNA) to give epoxyqueuosine (oQ-tRNA). The protein is S-adenosylmethionine:tRNA ribosyltransferase-isomerase of Xanthomonas campestris pv. campestris (strain B100).